Here is a 94-residue protein sequence, read N- to C-terminus: Integration host factor subunit beta (94 aa).

This sequence belongs to the bacterial histone-like protein family. In terms of assembly, heterodimer of an alpha and a beta chain.

Its function is as follows. This protein is one of the two subunits of integration host factor, a specific DNA-binding protein that functions in genetic recombination as well as in transcriptional and translational control. This is Integration host factor subunit beta from Vibrio atlanticus (strain LGP32) (Vibrio splendidus (strain Mel32)).